A 702-amino-acid chain; its full sequence is Elongation factor G (702 aa).

One can recognise a tr-type G domain in the interval 8-290 (TRYRNIGISA…AVIEYLPAPT (283 aa)). Residues 17 to 24 (AHIDAGKT), 88 to 92 (DTPGH), and 142 to 145 (NKMD) each bind GTP.

Belongs to the TRAFAC class translation factor GTPase superfamily. Classic translation factor GTPase family. EF-G/EF-2 subfamily.

It localises to the cytoplasm. Catalyzes the GTP-dependent ribosomal translocation step during translation elongation. During this step, the ribosome changes from the pre-translocational (PRE) to the post-translocational (POST) state as the newly formed A-site-bound peptidyl-tRNA and P-site-bound deacylated tRNA move to the P and E sites, respectively. Catalyzes the coordinated movement of the two tRNA molecules, the mRNA and conformational changes in the ribosome. The chain is Elongation factor G from Erwinia tasmaniensis (strain DSM 17950 / CFBP 7177 / CIP 109463 / NCPPB 4357 / Et1/99).